Reading from the N-terminus, the 401-residue chain is Tyrosine--tRNA ligase (401 aa).

Residues P42–H51 carry the 'HIGH' region motif. The 'KMSKS' region motif lies at K226–S230. Residue K229 participates in ATP binding. In terms of domain architecture, S4 RNA-binding spans M334–L394.

The protein belongs to the class-I aminoacyl-tRNA synthetase family. TyrS type 2 subfamily. As to quaternary structure, homodimer.

The protein localises to the cytoplasm. It carries out the reaction tRNA(Tyr) + L-tyrosine + ATP = L-tyrosyl-tRNA(Tyr) + AMP + diphosphate + H(+). Functionally, catalyzes the attachment of tyrosine to tRNA(Tyr) in a two-step reaction: tyrosine is first activated by ATP to form Tyr-AMP and then transferred to the acceptor end of tRNA(Tyr). This is Tyrosine--tRNA ligase from Haemophilus influenzae (strain ATCC 51907 / DSM 11121 / KW20 / Rd).